A 377-amino-acid chain; its full sequence is TraB domain-containing protein (377 aa).

Met-1 carries the N-acetylmethionine modification. Positions 1–34 are disordered; it reads MEEPEEQPPHEADTEPVVTSGASEAVPRVLPGDP. Residue Thr-65 is modified to Phosphothreonine.

The protein is TraB domain-containing protein (TRABD) of Bos taurus (Bovine).